The sequence spans 502 residues: Type II methyltransferase M.HincII (502 aa).

It belongs to the N(4)/N(6)-methyltransferase family.

The catalysed reaction is a 2'-deoxyadenosine in DNA + S-adenosyl-L-methionine = an N(6)-methyl-2'-deoxyadenosine in DNA + S-adenosyl-L-homocysteine + H(+). In terms of biological role, a gamma subtype methylase that recognizes the double-stranded sequence 5'-GTYRAC-3', methylates A-5 on both strands, and protects the DNA from cleavage by the HincII endonuclease. The sequence is that of Type II methyltransferase M.HincII from Haemophilus influenzae.